The chain runs to 273 residues: Ribosomal RNA small subunit methyltransferase A (273 aa).

S-adenosyl-L-methionine is bound by residues Asn18, Leu20, Gly45, Glu66, Asp91, and Asn113.

It belongs to the class I-like SAM-binding methyltransferase superfamily. rRNA adenine N(6)-methyltransferase family. RsmA subfamily.

It localises to the cytoplasm. It catalyses the reaction adenosine(1518)/adenosine(1519) in 16S rRNA + 4 S-adenosyl-L-methionine = N(6)-dimethyladenosine(1518)/N(6)-dimethyladenosine(1519) in 16S rRNA + 4 S-adenosyl-L-homocysteine + 4 H(+). In terms of biological role, specifically dimethylates two adjacent adenosines (A1518 and A1519) in the loop of a conserved hairpin near the 3'-end of 16S rRNA in the 30S particle. May play a critical role in biogenesis of 30S subunits. In Shigella boydii serotype 4 (strain Sb227), this protein is Ribosomal RNA small subunit methyltransferase A.